Consider the following 419-residue polypeptide: Elongation factor Tu, chloroplastic (419 aa).

Residues 10–214 (KPHVNIGTIG…TVDEHIPTPK (205 aa)) enclose the tr-type G domain. The tract at residues 19–26 (GHVDHGKT) is G1. 19 to 26 (GHVDHGKT) contacts GTP. Threonine 26 provides a ligand contact to Mg(2+). Positions 60 to 64 (GITIN) are G2. A G3 region spans residues 81–84 (DCPG). GTP is bound by residues 81–85 (DCPGH) and 136–139 (NKAD). Positions 136–139 (NKAD) are G4. Residues 174 to 176 (SAL) are G5.

Belongs to the TRAFAC class translation factor GTPase superfamily. Classic translation factor GTPase family. EF-Tu/EF-1A subfamily.

It localises to the plastid. The protein localises to the chloroplast. It catalyses the reaction GTP + H2O = GDP + phosphate + H(+). GTP hydrolase that promotes the GTP-dependent binding of aminoacyl-tRNA to the A-site of ribosomes during protein biosynthesis. The sequence is that of Elongation factor Tu, chloroplastic (tufA) from Stigeoclonium helveticum (Green alga).